We begin with the raw amino-acid sequence, 170 residues long: Ribosomal RNA small subunit methyltransferase G (170 aa).

Residues Gly70, Leu75, 120–121 (AE), and Arg138 each bind S-adenosyl-L-methionine.

The protein belongs to the methyltransferase superfamily. RNA methyltransferase RsmG family.

It is found in the cytoplasm. In terms of biological role, specifically methylates the N7 position of guanine in position 518 of 16S rRNA. This is Ribosomal RNA small subunit methyltransferase G from Mycobacterium ulcerans (strain Agy99).